We begin with the raw amino-acid sequence, 353 residues long: 26S proteasome non-ATPase regulatory subunit 8 (353 aa).

Positions 1 to 25 (MFIKGRAAKTPRGEPRRSSRGGRKL) are disordered. Positions 165 to 334 (PSFERYMAQL…QQKPEDSTIP (170 aa)) constitute a PCI domain. Lys300 is covalently cross-linked (Glycyl lysine isopeptide (Lys-Gly) (interchain with G-Cter in SUMO2)).

Belongs to the proteasome subunit S14 family. Component of the 19S proteasome regulatory particle complex. The 26S proteasome consists of a 20S core particle (CP) and two 19S regulatory subunits (RP). The regulatory particle is made of a lid composed of 9 subunits including PSMD8, a base containing 6 ATPases and few additional components. Interacts with DDI2. Interacts with TASOR. Expressed in the Sertoli cells of the testis.

In terms of biological role, component of the 26S proteasome, a multiprotein complex involved in the ATP-dependent degradation of ubiquitinated proteins. This complex plays a key role in the maintenance of protein homeostasis by removing misfolded or damaged proteins, which could impair cellular functions, and by removing proteins whose functions are no longer required. Therefore, the proteasome participates in numerous cellular processes, including cell cycle progression, apoptosis, or DNA damage repair. The sequence is that of 26S proteasome non-ATPase regulatory subunit 8 (Psmd8) from Mus musculus (Mouse).